The sequence spans 207 residues: UPF0319 protein VV1_2115 (207 aa).

Residues 1 to 18 (MLRVLGLAGMLMSFNIHA) form the signal peptide.

It belongs to the UPF0319 family.

The sequence is that of UPF0319 protein VV1_2115 from Vibrio vulnificus (strain CMCP6).